The sequence spans 398 residues: Serine/threonine-protein kinase 32A (398 aa).

The N-myristoyl glycine moiety is linked to residue Gly2. The Protein kinase domain occupies 23–281 (FEILRAIGKG…LTDIQNFPYM (259 aa)). ATP-binding positions include 29 to 37 (IGKGSFGKV) and Lys52. Catalysis depends on Asp146, which acts as the Proton acceptor. A disordered region spans residues 379–398 (ALEQTKNNTEEEEDGQNNNL). The segment covering 388–398 (EEEEDGQNNNL) has biased composition (acidic residues).

This sequence belongs to the protein kinase superfamily. Ser/Thr protein kinase family. It depends on Mg(2+) as a cofactor.

Its subcellular location is the cell membrane. The catalysed reaction is L-seryl-[protein] + ATP = O-phospho-L-seryl-[protein] + ADP + H(+). It catalyses the reaction L-threonyl-[protein] + ATP = O-phospho-L-threonyl-[protein] + ADP + H(+). The chain is Serine/threonine-protein kinase 32A from Mus musculus (Mouse).